A 495-amino-acid chain; its full sequence is Sorting nexin-4 (495 aa).

Over residues 20-31 (GAGSSAAHQHGG) the composition is skewed to low complexity. Residues 20–51 (GAGSSAAHQHGGQESEQPTHNQAEPEPNYTSM) form a disordered region. The region spanning 62–184 (VLECNVSSPL…TFLESPDWNA (123 aa)) is the PX domain. Residues Arg105, Thr107, Lys131, and Arg150 each contribute to the a 1,2-diacyl-sn-glycero-3-phospho-(1D-myo-inositol-3-phosphate) site. A compositionally biased stretch (low complexity) spans 193–207 (SVSMSGTSSGESGNA). Residues 193 to 219 (SVSMSGTSSGESGNAHYGGGSAGGGST) are disordered. Gly residues predominate over residues 208–219 (HYGGGSAGGGST). The stretch at 406–443 (DHEQSRRERLRKLELRIEELTVEVERAKKTSELFDEEV) forms a coiled coil.

The protein belongs to the sorting nexin family.

Its subcellular location is the cytoplasm. The protein localises to the cytosol. It localises to the preautophagosomal structure membrane. The protein resides in the endosome membrane. It is found in the mitochondrion membrane. Its subcellular location is the lipid droplet. In terms of biological role, sorting nexin, involved in the separation or division of vacuoles throughout the entire life cycle of the cells. Involved in retrieval of late-Golgi SNAREs from post-Golgi endosomes to the trans-Golgi network, for cytoplasm to vacuole transport (Cvt), and autophagy of large cargos including mitophagy, pexophagy and glycophagy. Required for invasion of the rice sheath. The sequence is that of Sorting nexin-4 (SNX4) from Pyricularia oryzae (strain 70-15 / ATCC MYA-4617 / FGSC 8958) (Rice blast fungus).